The primary structure comprises 372 residues: GDP-mannose 4,6-dehydratase (372 aa).

NADP(+) is bound by residues 8–13, 63–64, 85–89, and Tyr-100; these read GITGQD, DL, and LGAQS. Thr-132 is a catalytic residue. Catalysis depends on nucleophile residues Glu-134 and Tyr-156. Residues Lys-160, His-186, and Arg-191 each coordinate NADP(+).

Belongs to the NAD(P)-dependent epimerase/dehydratase family. GDP-mannose 4,6-dehydratase subfamily. NADP(+) serves as cofactor.

It carries out the reaction GDP-alpha-D-mannose = GDP-4-dehydro-alpha-D-rhamnose + H2O. It functions in the pathway bacterial outer membrane biogenesis; LPS O-antigen biosynthesis. The protein operates within nucleotide-sugar biosynthesis; GDP-L-fucose biosynthesis via de novo pathway; GDP-L-fucose from GDP-alpha-D-mannose: step 1/2. Its function is as follows. Catalyzes the conversion of GDP-D-mannose to GDP-4-dehydro-6-deoxy-D-mannose. The chain is GDP-mannose 4,6-dehydratase from Yersinia enterocolitica serotype O:8 / biotype 1B (strain NCTC 13174 / 8081).